The sequence spans 359 residues: Peptide chain release factor 1 (359 aa).

At Q235 the chain carries N5-methylglutamine.

The protein belongs to the prokaryotic/mitochondrial release factor family. Post-translationally, methylated by PrmC. Methylation increases the termination efficiency of RF1.

Its subcellular location is the cytoplasm. In terms of biological role, peptide chain release factor 1 directs the termination of translation in response to the peptide chain termination codons UAG and UAA. The protein is Peptide chain release factor 1 of Nitrosomonas eutropha (strain DSM 101675 / C91 / Nm57).